Consider the following 264-residue polypeptide: Small ribosomal subunit protein eS1 (264 aa).

Positions 232–264 are disordered; the sequence is HGEGGGAGKPSGDEAGTKVERADGYEPPVQESV. Basic and acidic residues predominate over residues 242 to 255; that stretch reads SGDEAGTKVERADG.

The protein belongs to the eukaryotic ribosomal protein eS1 family. As to quaternary structure, component of the small ribosomal subunit. Mature ribosomes consist of a small (40S) and a large (60S) subunit. The 40S subunit contains about 33 different proteins and 1 molecule of RNA (18S). The 60S subunit contains about 49 different proteins and 3 molecules of RNA (28S, 5.8S and 5S). Part of the small subunit (SSU) processome, composed of more than 70 proteins and the RNA chaperone small nucleolar RNA (snoRNA) U3.

The protein resides in the cytoplasm. The protein localises to the nucleus. It localises to the nucleolus. In terms of biological role, component of the small ribosomal subunit. The ribosome is a large ribonucleoprotein complex responsible for the synthesis of proteins in the cell. Part of the small subunit (SSU) processome, first precursor of the small eukaryotic ribosomal subunit. During the assembly of the SSU processome in the nucleolus, many ribosome biogenesis factors, an RNA chaperone and ribosomal proteins associate with the nascent pre-rRNA and work in concert to generate RNA folding, modifications, rearrangements and cleavage as well as targeted degradation of pre-ribosomal RNA by the RNA exosome. May play a role during erythropoiesis. The sequence is that of Small ribosomal subunit protein eS1 from Taeniopygia guttata (Zebra finch).